Consider the following 763-residue polypeptide: MVNKFLAGRLKKSKGKSFKGSSSKGNSKTVKSNNNDNVVVNAADLKWKPVEIPDTLDDFEGFYGLEEIDGVGVKIVGGQVQFVAHDDTKINGNEDNLDSKDKIEIDEDAPENDLVEFKNMDDMKDGELTDNSQSESEAEAESEAESEEEEEKTGDDEGEDGAEKVDNEVLKTNVFNTDIDLEDITPSDLPEWTEKVGELSFTTLHGLTKLGFNKPTLIQEEAIPMALKGEDIMGKASTGSGKTLAYGIPIIEKLMKSKSNTAPIGLIFTPTRELAKQVTDHLRKIASLIVDKSPHAILSLTGGLSIQKQERLLKYEGSGRIVVATPGRFLELIEKDKTLVERFSQISTLVLDEADRLLQDGHFDEFENILKYLGRESKNRKHNWQTMIFSATFATDLFDKLSHASWKNMKTPSKNENEMEIVLKHLMTKIHFKSKPILIDANPEDKVSSQIKESLIECAATERDLFCYYFVSMYPGKTLIFCNAIDSVKKLTAYLNNLNISCFQIHSSMTQKNRLRNLERYQQQSEKNKILGKPTVLVGSDVAARGLDIPGIQHVIHYHLPRTADVYIHRSGRTARANNEGVSVMICSPEEAMGPLRKLRKTLANKSGKDIIMGKKKWQKTVTMLPIDDTILSQLKERSRLASELADHDLASSSLQKDDTWMKKAAEDLGVDIDSDDEIKDTFLAKNINKKRNKTLGKDQKKVLVAQLNDLLKRPLRKDMRQRYLTGGLVNLADSLVKKRGHDHIIGHEKTDALETLKNKKRK.

Disordered regions lie at residues 1 to 35 and 87 to 169; these read MVNK…SNNN and DTKI…DNEV. The span at 18 to 35 shows a compositional bias: low complexity; it reads FKGSSSKGNSKTVKSNNN. Positions 104 to 114 are enriched in acidic residues; the sequence is EIDEDAPENDL. The segment covering 115–127 has biased composition (basic and acidic residues); the sequence is VEFKNMDDMKDGE. A compositionally biased stretch (acidic residues) spans 136–160; it reads SEAEAESEAESEEEEEKTGDDEGED. The Q motif motif lies at 192–220; that stretch reads WTEKVGELSFTTLHGLTKLGFNKPTLIQE. A Helicase ATP-binding domain is found at 223–411; it reads IPMALKGEDI…SHASWKNMKT (189 aa). 236-243 provides a ligand contact to ATP; the sequence is ASTGSGKT. The DEAD box motif lies at 352–355; it reads DEAD. The 170-residue stretch at 450-619 folds into the Helicase C-terminal domain; the sequence is QIKESLIECA…DIIMGKKKWQ (170 aa).

The protein belongs to the DEAD box helicase family. DDX24/MAK5 subfamily.

It is found in the nucleus. The protein localises to the nucleolus. The catalysed reaction is ATP + H2O = ADP + phosphate + H(+). Its function is as follows. ATP-binding RNA helicase involved in the biogenesis of 60S ribosomal subunits and is required for the normal formation of 25S and 5.8S rRNAs. This Vanderwaltozyma polyspora (strain ATCC 22028 / DSM 70294 / BCRC 21397 / CBS 2163 / NBRC 10782 / NRRL Y-8283 / UCD 57-17) (Kluyveromyces polysporus) protein is ATP-dependent RNA helicase MAK5 (MAK5).